The chain runs to 195 residues: Thymidine kinase (195 aa).

Residues 15–22 (GSMFSGKT) and 91–94 (DEAN) each bind ATP. Residue glutamate 92 is the Proton acceptor of the active site. Zn(2+) contacts are provided by cysteine 148, cysteine 151, cysteine 186, and cysteine 189.

Belongs to the thymidine kinase family. As to quaternary structure, homotetramer.

Its subcellular location is the cytoplasm. It catalyses the reaction thymidine + ATP = dTMP + ADP + H(+). The protein is Thymidine kinase of Halobacterium salinarum (strain ATCC 29341 / DSM 671 / R1).